The primary structure comprises 418 residues: Glutamyl-tRNA reductase (418 aa).

Residues Thr49–Arg52, Ser109, Glu114–Gln116, and Gln120 contribute to the substrate site. The Nucleophile role is filled by Cys50. Gly189–Ile194 is a binding site for NADP(+).

The protein belongs to the glutamyl-tRNA reductase family. In terms of assembly, homodimer.

The enzyme catalyses (S)-4-amino-5-oxopentanoate + tRNA(Glu) + NADP(+) = L-glutamyl-tRNA(Glu) + NADPH + H(+). The protein operates within porphyrin-containing compound metabolism; protoporphyrin-IX biosynthesis; 5-aminolevulinate from L-glutamyl-tRNA(Glu): step 1/2. Catalyzes the NADPH-dependent reduction of glutamyl-tRNA(Glu) to glutamate 1-semialdehyde (GSA). This Cronobacter sakazakii (strain ATCC BAA-894) (Enterobacter sakazakii) protein is Glutamyl-tRNA reductase.